The following is a 326-amino-acid chain: Adenosine receptor A1 (326 aa).

The Extracellular portion of the chain corresponds to 1 to 10 (MPPYISAFQA). Residues 11–33 (AYIGIEVLIALVSVPGNVLVIWA) form a helical membrane-spanning segment. Topologically, residues 34 to 46 (VKVNQALRDATFC) are cytoplasmic. Residues 47 to 69 (FIVSLAVADVAVGALVIPLAILI) traverse the membrane as a helical segment. Residues 70-80 (NIGPQTYFHTC) are Extracellular-facing. The cysteines at positions 80 and 169 are disulfide-linked. Residues 81 to 102 (LMVACPVLILTQSSILALLAIA) traverse the membrane as a helical segment. Over 103–123 (VDRYLRVKIPLRYKTVVTQRR) the chain is Cytoplasmic. Residues 124 to 146 (AAVAIAGCWILSLVVGLTPMFGW) traverse the membrane as a helical segment. Over 147–176 (NNLSVVEQDWRANGSVGEPVIKCEFEKVIS) the chain is Extracellular. N-linked (GlcNAc...) asparagine glycans are attached at residues N148 and N159. The chain crosses the membrane as a helical span at residues 177–201 (MEYMVYFNFFVWVLPPLLLMVLIYL). The Cytoplasmic segment spans residues 202-235 (EVFYLIRKQLNKKVSASSGDPQKYYGKELKIAKS). A helical membrane pass occupies residues 236-259 (LALILFLFALSWLPLHILNCITLF). Residues 260–267 (CPTCQKPS) lie on the Extracellular side of the membrane. The helical transmembrane segment at 268-292 (ILIYIAIFLTHGNSAMNPIVYAFRI) threads the bilayer. At 293 to 326 (HKFRVTFLKIWNDHFRCQPKPPIDEDLPEEKAED) the chain is on the cytoplasmic side. A lipid anchor (S-palmitoyl cysteine) is attached at C309.

Belongs to the G-protein coupled receptor 1 family. As to expression, widely expressed in brain and spinal cord.

It is found in the cell membrane. Its function is as follows. Receptor for adenosine. The activity of this receptor is mediated by G proteins which inhibit adenylyl cyclase. This chain is Adenosine receptor A1 (Adora1), found in Rattus norvegicus (Rat).